A 136-amino-acid polypeptide reads, in one-letter code: MQASAAFPKAARLLKTDEFSSVFRLRPWRRTAHFVIYGKPTGRDARLGLVIGKKYAARAVTRNLVKRLAREAFRTRRAEFAGWDILLRLHTRFDKKAMPSAASAPLAALCAGEIRELLDRAAREVARRNGAKPASE.

This sequence belongs to the RnpA family. As to quaternary structure, consists of a catalytic RNA component (M1 or rnpB) and a protein subunit.

The catalysed reaction is Endonucleolytic cleavage of RNA, removing 5'-extranucleotides from tRNA precursor.. Functionally, RNaseP catalyzes the removal of the 5'-leader sequence from pre-tRNA to produce the mature 5'-terminus. It can also cleave other RNA substrates such as 4.5S RNA. The protein component plays an auxiliary but essential role in vivo by binding to the 5'-leader sequence and broadening the substrate specificity of the ribozyme. This is Ribonuclease P protein component from Burkholderia mallei (strain NCTC 10247).